A 1146-amino-acid chain; its full sequence is Ankyrin repeat and fibronectin type-III domain-containing protein 1 (1146 aa).

2 ANK repeats span residues 133–162 (QGNEAMFEAVEQQDMDAVQILLYQYTPEEL) and 170–199 (EGLTPLDIAIMTNNVPIARILLRTGARESP). The Fibronectin type-III domain occupies 270–366 (MPTNVCLMVT…TTTPACASPS (97 aa)). The tract at residues 607-614 (GLYLGYLK) is highly conserved peptide sequence. Disordered regions lie at residues 855–887 (NSTSSSHIDCLPSPPPSPEMHRRKTVSDSQPCS), 945–964 (VKTPLGPGQDPQGEGPNPDH), and 1106–1146 (PWAS…SSML). Residues 1131–1146 (EGPTASPMSEILSSML) are compositionally biased toward polar residues.

Functionally, may play a role in neuronal function. This Homo sapiens (Human) protein is Ankyrin repeat and fibronectin type-III domain-containing protein 1.